An 85-amino-acid chain; its full sequence is Small ribosomal subunit protein bS16c (85 aa).

Belongs to the bacterial ribosomal protein bS16 family.

It is found in the plastid. The protein localises to the chloroplast. The polypeptide is Small ribosomal subunit protein bS16c (Cucumis sativus (Cucumber)).